A 264-amino-acid chain; its full sequence is Formamidopyrimidine-DNA glycosylase (264 aa).

Catalysis depends on proline 2, which acts as the Schiff-base intermediate with DNA. Residue glutamate 3 is the Proton donor of the active site. Lysine 58 (proton donor; for beta-elimination activity) is an active-site residue. Residues histidine 89, arginine 107, and arginine 144 each coordinate DNA. Residues 229–263 (RVYQRTGEPCLNCKTPIRRVIVTQRSSHFCPHCQK) form an FPG-type zinc finger. Arginine 253 acts as the Proton donor; for delta-elimination activity in catalysis.

It belongs to the FPG family. Monomer. Zn(2+) is required as a cofactor.

It carries out the reaction Hydrolysis of DNA containing ring-opened 7-methylguanine residues, releasing 2,6-diamino-4-hydroxy-5-(N-methyl)formamidopyrimidine.. The catalysed reaction is 2'-deoxyribonucleotide-(2'-deoxyribose 5'-phosphate)-2'-deoxyribonucleotide-DNA = a 3'-end 2'-deoxyribonucleotide-(2,3-dehydro-2,3-deoxyribose 5'-phosphate)-DNA + a 5'-end 5'-phospho-2'-deoxyribonucleoside-DNA + H(+). Functionally, involved in base excision repair of DNA damaged by oxidation or by mutagenic agents. Acts as a DNA glycosylase that recognizes and removes damaged bases. Has a preference for oxidized purines, such as 7,8-dihydro-8-oxoguanine (8-oxoG). Has AP (apurinic/apyrimidinic) lyase activity and introduces nicks in the DNA strand. Cleaves the DNA backbone by beta-delta elimination to generate a single-strand break at the site of the removed base with both 3'- and 5'-phosphates. In Solibacter usitatus (strain Ellin6076), this protein is Formamidopyrimidine-DNA glycosylase.